Consider the following 103-residue polypeptide: Nucleoid-associated protein BH0035 (103 aa).

Low complexity predominate over residues 1-20 (MKNMGQMMKQMQKMQKQMMK). Residues 1–29 (MKNMGQMMKQMQKMQKQMMKAQEELKEKT) form a disordered region.

Belongs to the YbaB/EbfC family. As to quaternary structure, homodimer.

It is found in the cytoplasm. It localises to the nucleoid. Its function is as follows. Binds to DNA and alters its conformation. May be involved in regulation of gene expression, nucleoid organization and DNA protection. The polypeptide is Nucleoid-associated protein BH0035 (Halalkalibacterium halodurans (strain ATCC BAA-125 / DSM 18197 / FERM 7344 / JCM 9153 / C-125) (Bacillus halodurans)).